Reading from the N-terminus, the 149-residue chain is Large ribosomal subunit protein eL8 (149 aa).

The protein belongs to the eukaryotic ribosomal protein eL8 family. As to quaternary structure, part of the 50S ribosomal subunit. Probably part of the RNase P complex.

Its subcellular location is the cytoplasm. Its function is as follows. Multifunctional RNA-binding protein that recognizes the K-turn motif in ribosomal RNA, the RNA component of RNase P, box H/ACA, box C/D and box C'/D' sRNAs. This Pyrobaculum calidifontis (strain DSM 21063 / JCM 11548 / VA1) protein is Large ribosomal subunit protein eL8.